Consider the following 737-residue polypeptide: Envelope glycoprotein H (737 aa).

Residues 1–25 (MLIRRRALWLTIPILIIMTSHKIMC) form the signal peptide. Residues 26–702 (AFDLSHVHSE…NFFLFSSKSP (677 aa)) lie on the Virion surface side of the membrane. Asn62, Asn212, Asn365, Asn412, Asn448, Asn465, Asn544, Asn569, Asn603, and Asn683 each carry an N-linked (GlcNAc...) asparagine; by host glycan. The segment at 191–253 (GSVTLFGHIT…MMMYDDFEII (63 aa)) is interaction with gL. Residues 703–723 (GAIVLYIIIISLIVWTLYEII) form a helical membrane-spanning segment. The Intravirion portion of the chain corresponds to 724–737 (KLFCYKRQWQYQKL).

It belongs to the herpesviridae glycoprotein H family. As to quaternary structure, interacts with glycoprotein L (gL); this interaction is necessary for the correct processing and cell surface expression of gH. The heterodimer gH/gL seems to interact with gB trimers during fusion. Post-translationally, N-glycosylated, O-glycosylated, and sialylated.

The protein localises to the virion membrane. The protein resides in the host cell membrane. Its subcellular location is the host endosome membrane. In terms of biological role, the heterodimer glycoprotein H-glycoprotein L is required for the fusion of viral and plasma membranes leading to virus entry into the host cell. Following initial binding to host receptor, membrane fusion is mediated by the fusion machinery composed of gB and the heterodimer gH/gL. May also be involved in the fusion between the virion envelope and the outer nuclear membrane during virion morphogenesis. This Elephantid herpesvirus 1 (isolate Asian elephant/Berlin/Kiba/1998) (EIHV-1) protein is Envelope glycoprotein H.